Here is a 396-residue protein sequence, read N- to C-terminus: 1-deoxy-D-xylulose 5-phosphate reductoisomerase (396 aa).

NADPH is bound by residues Thr10, Gly11, Ser12, Ile13, and Asn123. Lys124 is a binding site for 1-deoxy-D-xylulose 5-phosphate. Glu125 contributes to the NADPH binding site. Asp149 provides a ligand contact to Mn(2+). Ser150, Glu151, Ser185, and His208 together coordinate 1-deoxy-D-xylulose 5-phosphate. Position 151 (Glu151) interacts with Mn(2+). Gly214 provides a ligand contact to NADPH. 1-deoxy-D-xylulose 5-phosphate contacts are provided by Ser221, Asn226, Lys227, and Glu230. Glu230 is a binding site for Mn(2+).

Belongs to the DXR family. Mg(2+) is required as a cofactor. Mn(2+) serves as cofactor.

The catalysed reaction is 2-C-methyl-D-erythritol 4-phosphate + NADP(+) = 1-deoxy-D-xylulose 5-phosphate + NADPH + H(+). It participates in isoprenoid biosynthesis; isopentenyl diphosphate biosynthesis via DXP pathway; isopentenyl diphosphate from 1-deoxy-D-xylulose 5-phosphate: step 1/6. Catalyzes the NADPH-dependent rearrangement and reduction of 1-deoxy-D-xylulose-5-phosphate (DXP) to 2-C-methyl-D-erythritol 4-phosphate (MEP). This is 1-deoxy-D-xylulose 5-phosphate reductoisomerase from Shewanella baltica (strain OS223).